We begin with the raw amino-acid sequence, 1351 residues long: Spike glycoprotein (1351 aa).

Positions 1–12 (MFLIIFILPTTL) are cleaved as a signal peptide. The Extracellular segment spans residues 13-1295 (AVIGDFNCTN…GTYEMYVKWP (1283 aa)). The BetaCoV S1-NTD domain maps to 14–294 (VIGDFNCTNS…SFLSEIQCKT (281 aa)). N-linked (GlcNAc...) asparagine; by host glycans are attached at residues asparagine 19, asparagine 29, asparagine 58, asparagine 114, asparagine 132, asparagine 171, asparagine 188, asparagine 192, and asparagine 251. Cystine bridges form between cysteine 20/cysteine 156, cysteine 151/cysteine 183, and cysteine 163/cysteine 242. Intrachain disulfides connect cysteine 282–cysteine 292 and cysteine 327–cysteine 352. Positions 325 to 605 (PDCDIDNWLN…GINSGTTCSN (281 aa)) constitute a BetaCoV S1-CTD domain. N-linked (GlcNAc...) asparagine; by host glycans are attached at residues asparagine 335 and asparagine 355. Cystine bridges form between cysteine 370/cysteine 423 and cysteine 382/cysteine 603. N-linked (GlcNAc...) asparagine; by host glycans are attached at residues asparagine 433, asparagine 454, asparagine 561, asparagine 664, asparagine 684, asparagine 703, asparagine 725, asparagine 771, asparagine 776, and asparagine 793. 2 fusion peptide regions span residues 901 to 922 (SLLE…VEAY) and 920 to 940 (EAYN…VQSF). A glycan (N-linked (GlcNAc...) asparagine; by host) is linked at asparagine 924. A disulfide bridge connects residues cysteine 925 and cysteine 936. The segment at 1001–1051 (QKLIANAFNKALLSIQNGFTATNSALAKIQSVVNANAQALNSLLQQLFNKF) is heptad repeat 1. The stretch at 1030 to 1074 (QSVVNANAQALNSLLQQLFNKFGAISSSLQEILSRLDNLEAQVQI) forms a coiled coil. Residues asparagine 1181, asparagine 1211, asparagine 1221, asparagine 1226, asparagine 1240, asparagine 1247, asparagine 1255, and asparagine 1276 are each glycosylated (N-linked (GlcNAc...) asparagine; by host). The interval 1245–1284 (APNLTFNSHINATFLDLYYEMNVIQESIKSLNSSFINLKE) is heptad repeat 2. The stretch at 1257–1285 (TFLDLYYEMNVIQESIKSLNSSFINLKEI) forms a coiled coil. The chain crosses the membrane as a helical span at residues 1296–1316 (WYIWLLIVILFIIFLMILFFI). The Cytoplasmic portion of the chain corresponds to 1317-1351 (CCCTGCGSACFSKCHNCCDEYGGHNDFVIKASHDD). The KxHxx signature appears at 1347–1351 (ASHDD).

Belongs to the betacoronaviruses spike protein family. In terms of assembly, homotrimer; each monomer consists of a S1 and a S2 subunit. The resulting peplomers protrude from the virus surface as spikes. In terms of processing, specific enzymatic cleavages in vivo yield mature proteins. The precursor is processed into S1 and S2 by host cell furin or another cellular protease to yield the mature S1 and S2 proteins. Additionally, a second cleavage leads to the release of a fusion peptide after viral attachment to host cell receptor. The cytoplasmic Cys-rich domain is palmitoylated. Spike glycoprotein is digested within host endosomes.

It localises to the virion membrane. The protein resides in the host endoplasmic reticulum-Golgi intermediate compartment membrane. Its subcellular location is the host cell membrane. In terms of biological role, attaches the virion to the cell membrane by interacting with host receptor, initiating the infection. Its function is as follows. Mediates fusion of the virion and cellular membranes by acting as a class I viral fusion protein. Under the current model, the protein has at least three conformational states: pre-fusion native state, pre-hairpin intermediate state, and post-fusion hairpin state. During viral and target cell membrane fusion, the coiled coil regions (heptad repeats) assume a trimer-of-hairpins structure, positioning the fusion peptide in close proximity to the C-terminal region of the ectodomain. The formation of this structure appears to drive apposition and subsequent fusion of viral and target cell membranes. Functionally, acts as a viral fusion peptide which is unmasked following S2 cleavage occurring upon virus endocytosis. In Human coronavirus HKU1 (isolate N2) (HCoV-HKU1), this protein is Spike glycoprotein.